The following is a 487-amino-acid chain: DNA ligase (487 aa).

K159 functions as the N6-AMP-lysine intermediate in the catalytic mechanism. The ATP site is built by R164, R182, and E217. E217 contributes to the a divalent metal cation binding site. The interval 229-237 is interaction with the sliding clamp; that stretch reads EGLDFLFDA. An a divalent metal cation-binding site is contributed by E344. Residues R359 and K365 each coordinate ATP.

This sequence belongs to the ATP-dependent DNA ligase family. As to quaternary structure, interacts with the sliding clamp. The cofactor is a divalent metal cation.

The enzyme catalyses ATP + (deoxyribonucleotide)n-3'-hydroxyl + 5'-phospho-(deoxyribonucleotide)m = (deoxyribonucleotide)n+m + AMP + diphosphate.. In terms of biological role, DNA ligase, which is expressed in the early stage of lytic development, has been implicated in T4 DNA synthesis and genetic recombination. It may also play a role in T4 DNA repair. This is DNA ligase (30) from Escherichia coli (Bacteriophage T6).